The chain runs to 318 residues: MIDLSPLARRLAGTPLATWANGLQAQLDAKMEKGHGDLERWQSALDALPKIQPSEIDLINGLRLDTDCDDATRAQMRTALMGLSPWRKGPFDLFGVHVDTEWRSDWKWSRVAPHLNLEGKRILDVGCGNGYYMWRMLGAGAHSVIGVDPNWLFFCQFQAVQRYLSEPSVWHLPFPFEDLPANLEGFDTVFSMGVFYHRRSPIEHLLALKDCLVKGGELVLETLVVEGDQHQVLVPEDRYAQMRNVWFLPSVPALELWLRRAGFSDVRCVDVSVTSIEEQRGTEWMKYQSLSDFLDPNDHSKTIEGLPAPMRAVIVAKK.

7 residues coordinate carboxy-S-adenosyl-L-methionine: Lys-88, Trp-102, Lys-107, Gly-126, Met-192, Tyr-196, and Arg-311.

This sequence belongs to the class I-like SAM-binding methyltransferase superfamily. CmoB family. Homotetramer.

It catalyses the reaction carboxy-S-adenosyl-L-methionine + 5-hydroxyuridine(34) in tRNA = 5-carboxymethoxyuridine(34) in tRNA + S-adenosyl-L-homocysteine + H(+). Catalyzes carboxymethyl transfer from carboxy-S-adenosyl-L-methionine (Cx-SAM) to 5-hydroxyuridine (ho5U) to form 5-carboxymethoxyuridine (cmo5U) at position 34 in tRNAs. The sequence is that of tRNA U34 carboxymethyltransferase from Pseudomonas fluorescens (strain ATCC BAA-477 / NRRL B-23932 / Pf-5).